The primary structure comprises 161 residues: Troponin C, slow skeletal and cardiac muscles (161 aa).

The residue at position 1 (M1) is an N-acetylmethionine. EF-hand domains lie at 16–51 (QKNE…LGQN), 52–87 (PTPE…CMKD), 92–127 (KSEE…TGET), and 128–161 (ITED…KGVE). 5 residues coordinate Ca(2+): D65, D67, S69, T71, and E76. The residue at position 98 (S98) is a Phosphoserine. The Ca(2+) site is built by D105, N107, D109, Y111, E116, D141, N143, D145, R147, and E152.

The protein belongs to the troponin C family.

Troponin is the central regulatory protein of striated muscle contraction. Tn consists of three components: Tn-I which is the inhibitor of actomyosin ATPase, Tn-T which contains the binding site for tropomyosin and Tn-C. The binding of calcium to Tn-C abolishes the inhibitory action of Tn on actin filaments. This Bos taurus (Bovine) protein is Troponin C, slow skeletal and cardiac muscles (TNNC1).